Here is a 433-residue protein sequence, read N- to C-terminus: Serine hydroxymethyltransferase (433 aa).

Residues L132 and 136–138 (GHL) contribute to the (6S)-5,6,7,8-tetrahydrofolate site. K241 bears the N6-(pyridoxal phosphate)lysine mark.

Belongs to the SHMT family. Homodimer. It depends on pyridoxal 5'-phosphate as a cofactor.

Its subcellular location is the cytoplasm. It catalyses the reaction (6R)-5,10-methylene-5,6,7,8-tetrahydrofolate + glycine + H2O = (6S)-5,6,7,8-tetrahydrofolate + L-serine. Its pathway is one-carbon metabolism; tetrahydrofolate interconversion. It participates in amino-acid biosynthesis; glycine biosynthesis; glycine from L-serine: step 1/1. Catalyzes the reversible interconversion of serine and glycine with tetrahydrofolate (THF) serving as the one-carbon carrier. This reaction serves as the major source of one-carbon groups required for the biosynthesis of purines, thymidylate, methionine, and other important biomolecules. Also exhibits THF-independent aldolase activity toward beta-hydroxyamino acids, producing glycine and aldehydes, via a retro-aldol mechanism. This chain is Serine hydroxymethyltransferase, found in Nitrobacter winogradskyi (strain ATCC 25391 / DSM 10237 / CIP 104748 / NCIMB 11846 / Nb-255).